The sequence spans 159 residues: Probable cyclic pyranopterin monophosphate synthase accessory protein (159 aa).

The active site involves D128.

The protein belongs to the MoaC family.

Its pathway is cofactor biosynthesis; molybdopterin biosynthesis. Functionally, together with MoaA, is involved in the conversion of 5'-GTP to cyclic pyranopterin monophosphate (cPMP or molybdopterin precursor Z). In Methanothermobacter thermautotrophicus (strain ATCC 29096 / DSM 1053 / JCM 10044 / NBRC 100330 / Delta H) (Methanobacterium thermoautotrophicum), this protein is Probable cyclic pyranopterin monophosphate synthase accessory protein.